The primary structure comprises 469 residues: ATP-dependent protease ATPase subunit HslU (469 aa).

ATP is bound by residues Ile24, 66-71 (GVGKTE), Asp282, Glu347, and Arg419.

This sequence belongs to the ClpX chaperone family. HslU subfamily. As to quaternary structure, a double ring-shaped homohexamer of HslV is capped on each side by a ring-shaped HslU homohexamer. The assembly of the HslU/HslV complex is dependent on binding of ATP.

It localises to the cytoplasm. Its function is as follows. ATPase subunit of a proteasome-like degradation complex; this subunit has chaperone activity. The binding of ATP and its subsequent hydrolysis by HslU are essential for unfolding of protein substrates subsequently hydrolyzed by HslV. HslU recognizes the N-terminal part of its protein substrates and unfolds these before they are guided to HslV for hydrolysis. The protein is ATP-dependent protease ATPase subunit HslU of Listeria monocytogenes serovar 1/2a (strain ATCC BAA-679 / EGD-e).